The chain runs to 289 residues: MKKLTSTTTTLWDNKLFINNLKNFMQTNTESNNNKTTAQEWKSFILVVVIALMIRILIIESFVVPTGSMKATILENDRIFGTKYSYGYSNYSLSFFDFIHLFKGRIFARTPERGDIIIFRPPHEMNTRYIKRLIGLPGDKVQLIDDVIYINDEKIERVESGIYVSEEGRKYLKFKETLPNGKTYFSYKLAPVLGIMFNDKYGNTDAFYVPEGEYFFLGDNRDQSNDSRIDLGFVPFENFIAKAQFIWFSTKITWWDSDIGVINLILKLKPWAESIRFNRIFRNLYSIED.

Over 1 to 43 the chain is Cytoplasmic; that stretch reads MKKLTSTTTTLWDNKLFINNLKNFMQTNTESNNNKTTAQEWKS. The helical transmembrane segment at 44-64 threads the bilayer; sequence FILVVVIALMIRILIIESFVV. At 65 to 289 the chain is on the periplasmic side; it reads PTGSMKATIL…IFRNLYSIED (225 aa). Catalysis depends on residues Ser68 and Lys131.

Belongs to the peptidase S26 family.

The protein localises to the cell inner membrane. It carries out the reaction Cleavage of hydrophobic, N-terminal signal or leader sequences from secreted and periplasmic proteins.. The protein is Signal peptidase I (lepB) of Rickettsia bellii (strain OSU 85-389).